A 277-amino-acid chain; its full sequence is Putative thiosulfate sulfurtransferase mpst-4 (277 aa).

2 Rhodanese domains span residues 15-153 (NFGN…VVQS) and 155-243 (SKAE…QHLN). Cys204 (cysteine persulfide intermediate) is an active-site residue.

The catalysed reaction is thiosulfate + hydrogen cyanide = thiocyanate + sulfite + 2 H(+). The chain is Putative thiosulfate sulfurtransferase mpst-4 from Caenorhabditis elegans.